The primary structure comprises 396 residues: L-lactate dehydrogenase (396 aa).

Positions 1-380 constitute an FMN hydroxy acid dehydrogenase domain; that stretch reads MIISAASDYR…SGDSLVQELG (380 aa). Tyr24 contacts substrate. Residues Ser106 and Gln127 each coordinate FMN. Position 129 (Tyr129) interacts with substrate. Thr155 is a binding site for FMN. Arg164 provides a ligand contact to substrate. Residue Lys251 coordinates FMN. His275 serves as the catalytic Proton acceptor. Residue Arg278 coordinates substrate. 306–330 is a binding site for FMN; it reads DSGIRNGLDVVRMIALGADTVLLGR.

Belongs to the FMN-dependent alpha-hydroxy acid dehydrogenase family. It depends on FMN as a cofactor.

Its subcellular location is the cell inner membrane. It catalyses the reaction (S)-lactate + A = pyruvate + AH2. Catalyzes the conversion of L-lactate to pyruvate. Is coupled to the respiratory chain. In Salmonella arizonae (strain ATCC BAA-731 / CDC346-86 / RSK2980), this protein is L-lactate dehydrogenase.